The chain runs to 219 residues: Dephospho-CoA kinase (219 aa).

Positions 8–215 constitute a DPCK domain; sequence LVGVTGGIGS…EAAASGPDCQ (208 aa). An ATP-binding site is contributed by 16-21; the sequence is GSGKST.

Belongs to the CoaE family.

The protein resides in the cytoplasm. The catalysed reaction is 3'-dephospho-CoA + ATP = ADP + CoA + H(+). It functions in the pathway cofactor biosynthesis; coenzyme A biosynthesis; CoA from (R)-pantothenate: step 5/5. Catalyzes the phosphorylation of the 3'-hydroxyl group of dephosphocoenzyme A to form coenzyme A. In Chlorobium luteolum (strain DSM 273 / BCRC 81028 / 2530) (Pelodictyon luteolum), this protein is Dephospho-CoA kinase.